The following is a 310-amino-acid chain: GMP synthase [glutamine-hydrolyzing] subunit B (310 aa).

The 184-residue stretch at phenylalanine 2–arginine 185 folds into the GMPS ATP-PPase domain. Serine 29–alanine 35 contacts ATP.

As to quaternary structure, heterodimer composed of a glutamine amidotransferase subunit (A) and a GMP-binding subunit (B).

The catalysed reaction is XMP + L-glutamine + ATP + H2O = GMP + L-glutamate + AMP + diphosphate + 2 H(+). It functions in the pathway purine metabolism; GMP biosynthesis; GMP from XMP (L-Gln route): step 1/1. Functionally, catalyzes the synthesis of GMP from XMP. The chain is GMP synthase [glutamine-hydrolyzing] subunit B from Methanococcus maripaludis (strain DSM 14266 / JCM 13030 / NBRC 101832 / S2 / LL).